Reading from the N-terminus, the 311-residue chain is Meteorin-like protein (311 aa).

Residues 1 to 45 form the signal peptide; sequence MRGAVWAARRRAGQQWPRSPGPGPGPPPPPPLLLLLLLLLGGASA. Residues C52 and C75 are joined by a disulfide bond. An N-linked (GlcNAc...) asparagine glycan is attached at N103. 4 disulfides stabilise this stretch: C107–C143, C188–C260, C191–C284, and C201–C306.

It belongs to the meteorin family. Post-translationally, N-glycosylated. In terms of tissue distribution, highly expressed in subcutaneous adipose tissue.

Its subcellular location is the secreted. Its function is as follows. Hormone induced following exercise or cold exposure that promotes energy expenditure. Induced either in the skeletal muscle after exercise or in adipose tissue following cold exposure and is present in the circulation. Able to stimulate energy expenditure associated with the browning of the white fat depots and improves glucose tolerance. Does not promote an increase in a thermogenic gene program via direct action on adipocytes, but acts by stimulating several immune cell subtypes to enter the adipose tissue and activate their prothermogenic actions. Stimulates an eosinophil-dependent increase in IL4 expression and promotes alternative activation of adipose tissue macrophages, which are required for the increased expression of the thermogenic and anti-inflammatory gene programs in fat. Required for some cold-induced thermogenic responses, suggesting a role in metabolic adaptations to cold temperatures. The protein is Meteorin-like protein (Metrnl) of Mus musculus (Mouse).